Reading from the N-terminus, the 754-residue chain is Phosphoribosylformylglycinamidine synthase subunit PurL (754 aa).

Residue histidine 52 is part of the active site. 2 residues coordinate ATP: tyrosine 55 and lysine 95. Glutamate 97 is a Mg(2+) binding site. Residues 98–101 and arginine 120 contribute to the substrate site; that span reads SHNH. Histidine 99 functions as the Proton acceptor in the catalytic mechanism. Aspartate 121 serves as a coordination point for Mg(2+). Position 244 (glutamine 244) interacts with substrate. Mg(2+) is bound at residue aspartate 272. 316-318 is a binding site for substrate; that stretch reads ESQ. Asparagine 504 and glycine 541 together coordinate ATP. Asparagine 542 is a Mg(2+) binding site. Residue serine 544 participates in substrate binding.

The protein belongs to the FGAMS family. As to quaternary structure, monomer. Part of the FGAM synthase complex composed of 1 PurL, 1 PurQ and 2 PurS subunits.

It localises to the cytoplasm. The enzyme catalyses N(2)-formyl-N(1)-(5-phospho-beta-D-ribosyl)glycinamide + L-glutamine + ATP + H2O = 2-formamido-N(1)-(5-O-phospho-beta-D-ribosyl)acetamidine + L-glutamate + ADP + phosphate + H(+). The protein operates within purine metabolism; IMP biosynthesis via de novo pathway; 5-amino-1-(5-phospho-D-ribosyl)imidazole from N(2)-formyl-N(1)-(5-phospho-D-ribosyl)glycinamide: step 1/2. Part of the phosphoribosylformylglycinamidine synthase complex involved in the purines biosynthetic pathway. Catalyzes the ATP-dependent conversion of formylglycinamide ribonucleotide (FGAR) and glutamine to yield formylglycinamidine ribonucleotide (FGAM) and glutamate. The FGAM synthase complex is composed of three subunits. PurQ produces an ammonia molecule by converting glutamine to glutamate. PurL transfers the ammonia molecule to FGAR to form FGAM in an ATP-dependent manner. PurS interacts with PurQ and PurL and is thought to assist in the transfer of the ammonia molecule from PurQ to PurL. The protein is Phosphoribosylformylglycinamidine synthase subunit PurL of Salinibacter ruber (strain DSM 13855 / M31).